Reading from the N-terminus, the 418-residue chain is Glutamyl-tRNA reductase (418 aa).

Substrate is bound by residues 49–52, S109, 114–116, and Q120; these read TCNR and EPQ. The Nucleophile role is filled by C50. 189–194 lines the NADP(+) pocket; it reads GAGETI.

This sequence belongs to the glutamyl-tRNA reductase family. As to quaternary structure, homodimer.

The catalysed reaction is (S)-4-amino-5-oxopentanoate + tRNA(Glu) + NADP(+) = L-glutamyl-tRNA(Glu) + NADPH + H(+). It participates in porphyrin-containing compound metabolism; protoporphyrin-IX biosynthesis; 5-aminolevulinate from L-glutamyl-tRNA(Glu): step 1/2. Functionally, catalyzes the NADPH-dependent reduction of glutamyl-tRNA(Glu) to glutamate 1-semialdehyde (GSA). This chain is Glutamyl-tRNA reductase, found in Escherichia coli O127:H6 (strain E2348/69 / EPEC).